A 1711-amino-acid chain; its full sequence is Serine/threonine-protein kinase MRCK beta (1711 aa).

In terms of domain architecture, Protein kinase spans 76 to 342 (FEIIKVIGRG…IEDFKKHAFF (267 aa)). Residues 82-90 (IGRGAFGEV) and K105 each bind ATP. Residue D200 is the Proton acceptor of the active site. S221 and S233 each carry phosphoserine; by autocatalysis. The residue at position 239 (T239) is a Phosphothreonine; by autocatalysis. Residues 343–413 (EGLNWENIRN…TTESCFSDRG (71 aa)) enclose the AGC-kinase C-terminal domain. Phosphothreonine is present on T423. 2 coiled-coil regions span residues 431–815 (QRDL…AHWE) and 878–939 (ELQS…FRAD). Residues 461 to 484 (LQESTQTVQSLHGSSRALSNSNRD) are disordered. A compositionally biased stretch (polar residues) spans 463 to 481 (ESTQTVQSLHGSSRALSNS). R671 is subject to Omega-N-methylarginine. Y954 is subject to Phosphotyrosine. Residues 969–1009 (SSASEQETQAPKPEASPSMSVAASEQQEDMARPPQRPSAVP) are disordered. The Phorbol-ester/DAG-type zinc-finger motif lies at 1025–1075 (AHQFSIKSFSSPTQCSHCTSLMVGLIRQGYACEVCSFACHVSCKDGAPQVC). In terms of domain architecture, PH spans 1095–1214 (GTAYKGHVKV…WVGILEGLQS (120 aa)). The region spanning 1240–1513 (IKAILTAAIV…RPLNSEGTLN (274 aa)) is the CNH domain. The region spanning 1583–1596 (ISNPTNFNHVAHMG) is the CRIB domain. The tract at residues 1611 to 1711 (AVPPSQEERP…EGLEQPACDT (101 aa)) is disordered. Residues 1641-1650 (WPSSGGSEPS) show a composition bias toward polar residues. Over residues 1664-1675 (DFDKEPDSDSTK) the composition is skewed to basic and acidic residues. Residues S1680, S1682, S1686, S1690, and S1693 each carry the phosphoserine modification.

The protein belongs to the protein kinase superfamily. AGC Ser/Thr protein kinase family. DMPK subfamily. In terms of assembly, homodimer and homotetramer via the coiled coil regions. Interacts tightly with GTP-bound but not GDP-bound CDC42. Interacts with TJP1, when in the presence of catalytically active CDC42. Forms a tripartite complex with MYO18A and LURAP1 with the latter acting as an adapter connecting CDC42BPB and MYO18A. LURAP1 binding results in activation of CDC42BPB by abolition of its negative autoregulation. Interacts with STRIP1, STRN3 and SIKE1. Interacts with CPNE4 (via VWFA domain). Interacts with LURAP1. Interacts (via AGC-kinase C-terminal domain) with FAM89B/LRAP25 (via LRR repeat). Forms a tripartite complex with FAM89B/LRAP25 and LIMK1. It depends on Mg(2+) as a cofactor. Post-translationally, proteolytically cleaved by caspases upon apoptosis induction. Expressed in all tissues examined, with high levels in heart, brain, placenta and lung.

Its subcellular location is the cytoplasm. The protein localises to the cell membrane. It localises to the cell junction. It is found in the cell projection. The protein resides in the lamellipodium. The catalysed reaction is L-seryl-[protein] + ATP = O-phospho-L-seryl-[protein] + ADP + H(+). It catalyses the reaction L-threonyl-[protein] + ATP = O-phospho-L-threonyl-[protein] + ADP + H(+). Its activity is regulated as follows. Maintained in an inactive, closed conformation by an interaction between the kinase domain and the negative autoregulatory C-terminal coiled-coil region. Agonist binding to the phorbol ester binding site disrupts this, releasing the kinase domain to allow N-terminus-mediated dimerization and kinase activation by transautophosphorylation. Inhibited by chelerythrine chloride. Its function is as follows. Serine/threonine-protein kinase which is an important downstream effector of CDC42 and plays a role in the regulation of cytoskeleton reorganization and cell migration. Regulates actin cytoskeletal reorganization via phosphorylation of PPP1R12C and MYL9/MLC2. In concert with MYO18A and LURAP1, is involved in modulating lamellar actomyosin retrograde flow that is crucial to cell protrusion and migration. Phosphorylates PPP1R12A. In concert with FAM89B/LRAP25 mediates the targeting of LIMK1 to the lamellipodium resulting in its activation and subsequent phosphorylation of CFL1 which is important for lamellipodial F-actin regulation. This Homo sapiens (Human) protein is Serine/threonine-protein kinase MRCK beta.